Consider the following 126-residue polypeptide: UPF0738 protein BH2850 (126 aa).

The protein belongs to the UPF0738 family.

This Halalkalibacterium halodurans (strain ATCC BAA-125 / DSM 18197 / FERM 7344 / JCM 9153 / C-125) (Bacillus halodurans) protein is UPF0738 protein BH2850.